Reading from the N-terminus, the 132-residue chain is Histone H2A.1 (132 aa).

Ser2 is subject to N-acetylserine. Lys5 and Lys8 each carry N6-acetyllysine. Residues Lys14 and Lys22 each carry the N6-succinyllysine modification. An N5-methylglutamine modification is found at Gln106. At Lys120 the chain carries N6-malonyllysine; alternate. A Glycyl lysine isopeptide (Lys-Gly) (interchain with G-Cter in SUMO) cross-link involves residue Lys127. Residue Ser129 is modified to Phosphoserine. The [ST]-Q motif signature appears at 129 to 130 (SQ).

The protein belongs to the histone H2A family. The nucleosome is a histone octamer containing two molecules each of H2A, H2B, H3 and H4 assembled in one H3-H4 heterotetramer and two H2A-H2B heterodimers. The octamer wraps approximately 147 bp of DNA. Post-translationally, phosphorylated to form H2AS128ph (gamma-H2A) in response to DNA double-strand breaks (DSBs) generated by exogenous genotoxic agents and by stalled replication forks. Phosphorylation is dependent on the DNA damage checkpoint kinases MEC1/ATR and TEL1/ATM, spreads on either side of a detected DSB site and may mark the surrounding chromatin for recruitment of proteins required for DNA damage signaling and repair. Gamma-H2A interacts with ARP4, a shared component of the NuA4 histone acetyltransferase complex and the INO80 and SWR1 chromatin remodeling complexes, and serves to recruit first NuA4, mediating histone H4 acetylation, and subsequently the INO80/SWR1 complexes, facilitating DNA resection, to DSB sites. Gamma-H2A is required for sequestering cohesin around the break site, which is important for efficient post-replicative double-strand break repair by homologous recombination, holding the damaged chromatid close to its undamaged sister template. Gamma-H2A is removed from the DNA prior to the strand invasion-primer extension step of the repair process and subsequently dephosphorylated by PPH3, a component of the histone H2A phosphatase complex (HTP-C). Dephosphorylation is necessary for efficient recovery from the DNA damage checkpoint. In terms of processing, N-acetylated by NAT4. Acetylated by ESA1, a component of the NuA4 histone acetyltransferase (HAT) complex, to form H2AK4ac and H2AK7ac. Post-translationally, glutamine methylation at Gln-106 (H2AQ105me) by NOP1 is specifically dedicated to polymerase I. It is present at 35S ribosomal DNA locus and impairs binding of the FACT complex. In terms of processing, sumoylated to from H2AK126su. May lead to transcriptional repression.

It localises to the nucleus. Its subcellular location is the chromosome. Functionally, core component of nucleosome which plays a central role in DNA double strand break (DSB) repair. Nucleosomes wrap and compact DNA into chromatin, limiting DNA accessibility to the cellular machineries which require DNA as a template. Histones thereby play a central role in transcription regulation, DNA repair, DNA replication and chromosomal stability. DNA accessibility is regulated via a complex set of post-translational modifications of histones, also called histone code, and nucleosome remodeling. This Saccharomyces cerevisiae (strain ATCC 204508 / S288c) (Baker's yeast) protein is Histone H2A.1 (HTA1).